Reading from the N-terminus, the 189-residue chain is dCTP deaminase (189 aa).

Residues 112–117, 136–138, glutamine 157, tyrosine 171, and glutamine 181 contribute to the dCTP site; these read KSTYAR and TLE. Glutamate 138 acts as the Proton donor/acceptor in catalysis.

Belongs to the dCTP deaminase family. Homotrimer.

It carries out the reaction dCTP + H2O + H(+) = dUTP + NH4(+). It participates in pyrimidine metabolism; dUMP biosynthesis; dUMP from dCTP (dUTP route): step 1/2. Catalyzes the deamination of dCTP to dUTP. In Xanthomonas oryzae pv. oryzae (strain MAFF 311018), this protein is dCTP deaminase.